A 169-amino-acid polypeptide reads, in one-letter code: NAD(P)H-quinone oxidoreductase subunit J, chloroplastic (169 aa).

Belongs to the complex I 30 kDa subunit family. In terms of assembly, NDH is composed of at least 16 different subunits, 5 of which are encoded in the nucleus.

Its subcellular location is the plastid. The protein localises to the chloroplast thylakoid membrane. It catalyses the reaction a plastoquinone + NADH + (n+1) H(+)(in) = a plastoquinol + NAD(+) + n H(+)(out). It carries out the reaction a plastoquinone + NADPH + (n+1) H(+)(in) = a plastoquinol + NADP(+) + n H(+)(out). Its function is as follows. NDH shuttles electrons from NAD(P)H:plastoquinone, via FMN and iron-sulfur (Fe-S) centers, to quinones in the photosynthetic chain and possibly in a chloroplast respiratory chain. The immediate electron acceptor for the enzyme in this species is believed to be plastoquinone. Couples the redox reaction to proton translocation, and thus conserves the redox energy in a proton gradient. This is NAD(P)H-quinone oxidoreductase subunit J, chloroplastic from Staurastrum punctulatum (Green alga).